The sequence spans 432 residues: Histidine--tRNA ligase (432 aa).

Residues 412–432 (TQVPLAAFPPEEGRPTYDDYA) form a disordered region. The span at 422-432 (EEGRPTYDDYA) shows a compositional bias: basic and acidic residues.

Belongs to the class-II aminoacyl-tRNA synthetase family.

The protein localises to the cytoplasm. It catalyses the reaction tRNA(His) + L-histidine + ATP = L-histidyl-tRNA(His) + AMP + diphosphate + H(+). The chain is Histidine--tRNA ligase from Natronomonas pharaonis (strain ATCC 35678 / DSM 2160 / CIP 103997 / JCM 8858 / NBRC 14720 / NCIMB 2260 / Gabara) (Halobacterium pharaonis).